The sequence spans 219 residues: MTEQVQANETETPVAVADERIIRETGIDAKVAGIVEPVINTLGFRLVRVRLSGLNGQTLQIMAERPDGTMTVDDCELVSRTVAPVLDVEDPISGKYHLEISSPGIDRPLVRKSDFSDWAGHIAKVETSIVHEGRKKFRGRIVVGEADSVTIESDQISYGNEPVVRIPFDLISDARLVLTDDLIRDALRKDKALREGRIPGDDLGAEPEDVASTETQEKK.

The tract at residues 195–219 is disordered; it reads EGRIPGDDLGAEPEDVASTETQEKK.

Belongs to the RimP family.

Its subcellular location is the cytoplasm. Functionally, required for maturation of 30S ribosomal subunits. The polypeptide is Ribosome maturation factor RimP (Brucella abortus (strain S19)).